Reading from the N-terminus, the 974-residue chain is Phosphoenolpyruvate carboxylase 1 (974 aa).

Residues His-164 and Lys-604 contribute to the active site.

It belongs to the PEPCase type 1 family. Exists as a homotetramer or heterooligomer. The cofactor is Mg(2+).

The protein resides in the cytoplasm. It carries out the reaction oxaloacetate + phosphate = phosphoenolpyruvate + hydrogencarbonate. With respect to regulation, activated by glutamine and dihydroxyacetone phosphate. Inhibited by glutamate, aspartate, 2-oxoglutarate and malate. Functionally, through the carboxylation of phosphoenolpyruvate (PEP) it forms oxaloacetate, a four-carbon dicarboxylic acid source for the tricarboxylic acid cycle. This chain is Phosphoenolpyruvate carboxylase 1, found in Chlamydomonas reinhardtii (Chlamydomonas smithii).